The primary structure comprises 648 residues: MDLDNIEGLNEVRLAVYRAALKLRSLQKLCQMNLVLLQDLRPILNTLWSSGESTISLAQEDVQQHLEELFRSISPELPDQAVTEATDQTTRLLFKLFDRGQTGVILLRSVEAALIALCGDTLSAKQRALFRLAESYSGNQESDRGSISRSALRVLLEDLSQVPAVVQENHVFGHAETAVSSCFNGVISAGVTEEHFIWWLQSEPRLLLWLSTLYRISVSEAVQHRVHCHACKAFPITGLRYRCLKCLNVHLCQSCFLTERRSRKHKPSHSVLEYCTQPSWKESMASLASSARHALVPRHTRREAERKRALRAGSSAELRYSASNPALQFAAYADTHDAAAEASQTAAPAAVTVESKSLQTEEIQIPQRETAELQKDISVTQKAMRDLQRDKWLLEKEFQVWRVAAQSEHDSLEDKCSELKSMMETLNQHNQHLEEELDTVRHLLSLRHKEELKTSHSNLQLEQDGSINENNWTQPGLLKPHESSSTEHEVEERGTRQERRFEEEEDTLYDLSEDISTNLDDSESILPQDVHTALAQREEEELQEEEEGLHEKEEGLPTEEEELQHDRQDPSFFHGCMSDFAPDGHSDDSEMDDEEDLCELVQRLRNELSLYTASGSVCLQKEMLMTAAEGVRDSVSHLVTSVKSSSLA.

The segment at 223–279 (QHRVHCHACKAFPITGLRYRCLKCLNVHLCQSCFLTERRSRKHKPSHSVLEYCTQPS) adopts a ZZ-type zinc-finger fold. 8 residues coordinate Zn(2+): Cys228, Cys231, Cys243, Cys246, Cys252, Cys255, His265, and His269. Positions 367–446 (QRETAELQKD…LDTVRHLLSL (80 aa)) form a coiled coil. Positions 455–474 (SHSNLQLEQDGSINENNWTQ) are enriched in polar residues. Disordered stretches follow at residues 455–509 (SHSN…DTLY) and 536–557 (QREE…EGLP). Residues 479-502 (KPHESSSTEHEVEERGTRQERRFE) show a composition bias toward basic and acidic residues. A compositionally biased stretch (acidic residues) spans 538–548 (EEEELQEEEEG).

It localises to the cell membrane. The chain is Dystrotelin (dytn) from Danio rerio (Zebrafish).